Here is a 393-residue protein sequence, read N- to C-terminus: NAD(P)H-quinone oxidoreductase subunit H, chloroplastic (393 aa).

The protein belongs to the complex I 49 kDa subunit family. As to quaternary structure, NDH is composed of at least 16 different subunits, 5 of which are encoded in the nucleus.

The protein resides in the plastid. It is found in the chloroplast thylakoid membrane. It carries out the reaction a plastoquinone + NADH + (n+1) H(+)(in) = a plastoquinol + NAD(+) + n H(+)(out). It catalyses the reaction a plastoquinone + NADPH + (n+1) H(+)(in) = a plastoquinol + NADP(+) + n H(+)(out). Its function is as follows. NDH shuttles electrons from NAD(P)H:plastoquinone, via FMN and iron-sulfur (Fe-S) centers, to quinones in the photosynthetic chain and possibly in a chloroplast respiratory chain. The immediate electron acceptor for the enzyme in this species is believed to be plastoquinone. Couples the redox reaction to proton translocation, and thus conserves the redox energy in a proton gradient. In Guizotia abyssinica (Niger), this protein is NAD(P)H-quinone oxidoreductase subunit H, chloroplastic.